The sequence spans 703 residues: MARKTPIERYRNIGISAHIDAGKTTTTERILFYTGVNHKIGEVHDGAATMDWMEQEQERGITITSAATTAFWKGMGGNYPEHRFNIIDTPGHVDFTIEVERSMRVLDGACMVYCAVGGVQPQSETVWRQANKYGVPRLAFVNKMDRTGANFFKVYDQLKTRLKANPVPVVVPIGAEDGFQGVVDLLEMKAIVWDEASQGVKFEYQDIPAELQATADEWREKMVESAAEASEELMEKYLGGEELTRAEIVKALRDRTIACEIQPMLCGTAFKNKGVQRMLDAVIDFLPSPVDIPPVKGVDESDDEKKLERKADDNEKFSALAFKIMTDPFVGQLIFFRVYSGKINSGDTVYNPVKQKKERLGRILQMHANQREEIKEVLAGDIAAAVGLKDATTGDTLCDPAAPIVLERMVFPEPVISQAVEPKTKADQEKMGIALNRLAAEDPSFRVRTDEESGQTIISGMGELHLEILVDRMKREFGVEANIGAPQVAYRETIRKKAEDVEGKFVKQSGGRGQYGHAVITLEPQEPGKGFEFIDAIKGGVIPREYIPAVEKGIVDTLPAGILAGFPVVDVKVTLTFGSYHDVDSNENAFRMAGSMAFKEAMRKASPVLLEPMMAVEVETPEDYTGTVMGDLSSRRGIVQGMDDMVGGGKIIKAEVPLSEMFGYSTALRSATQGRATYTMEFKHYAEAPKNIAEAVMTAKGKQ.

Positions glutamate 8 to valine 290 constitute a tr-type G domain. Residues alanine 17–threonine 24, aspartate 88–histidine 92, and asparagine 142–aspartate 145 contribute to the GTP site.

This sequence belongs to the TRAFAC class translation factor GTPase superfamily. Classic translation factor GTPase family. EF-G/EF-2 subfamily.

The protein localises to the cytoplasm. In terms of biological role, catalyzes the GTP-dependent ribosomal translocation step during translation elongation. During this step, the ribosome changes from the pre-translocational (PRE) to the post-translocational (POST) state as the newly formed A-site-bound peptidyl-tRNA and P-site-bound deacylated tRNA move to the P and E sites, respectively. Catalyzes the coordinated movement of the two tRNA molecules, the mRNA and conformational changes in the ribosome. The sequence is that of Elongation factor G 1 from Cupriavidus metallidurans (strain ATCC 43123 / DSM 2839 / NBRC 102507 / CH34) (Ralstonia metallidurans).